A 128-amino-acid chain; its full sequence is Small ribosomal subunit protein uS11 (128 aa).

Belongs to the universal ribosomal protein uS11 family. In terms of assembly, part of the 30S ribosomal subunit. Interacts with proteins S7 and S18. Binds to IF-3.

In terms of biological role, located on the platform of the 30S subunit, it bridges several disparate RNA helices of the 16S rRNA. Forms part of the Shine-Dalgarno cleft in the 70S ribosome. The sequence is that of Small ribosomal subunit protein uS11 from Vesicomyosocius okutanii subsp. Calyptogena okutanii (strain HA).